The sequence spans 203 residues: V-type ATP synthase subunit D (203 aa).

The protein belongs to the V-ATPase D subunit family.

In terms of biological role, produces ATP from ADP in the presence of a proton gradient across the membrane. In Streptococcus pneumoniae (strain Hungary19A-6), this protein is V-type ATP synthase subunit D.